The chain runs to 302 residues: Protoheme IX farnesyltransferase 1 (302 aa).

9 helical membrane passes run 30–50, 52–72, 102–122, 124–144, 152–172, 178–198, 224–244, 245–265, and 282–302; these read VVAL…PGAV, LQPL…AAAF, ALTF…TLVN, LTAW…TAYL, IVVG…SVTG, ALLL…ALAI, CILL…LVGM, CGPL…YKSW, and FSIY…YLWV.

The protein belongs to the UbiA prenyltransferase family. Protoheme IX farnesyltransferase subfamily.

It localises to the cell inner membrane. The enzyme catalyses heme b + (2E,6E)-farnesyl diphosphate + H2O = Fe(II)-heme o + diphosphate. Its pathway is porphyrin-containing compound metabolism; heme O biosynthesis; heme O from protoheme: step 1/1. In terms of biological role, converts heme B (protoheme IX) to heme O by substitution of the vinyl group on carbon 2 of heme B porphyrin ring with a hydroxyethyl farnesyl side group. The chain is Protoheme IX farnesyltransferase 1 from Shewanella woodyi (strain ATCC 51908 / MS32).